The chain runs to 439 residues: GTPase Der (439 aa).

EngA-type G domains follow at residues 4 to 168 (PIVA…KDDE) and 177 to 352 (INIA…DNYT). GTP-binding positions include 10-17 (GRPNVGKS), 57-61 (DTGGI), 120-123 (NKID), 183-190 (GKPNVGKS), 230-234 (DTAGL), and 295-298 (NKWD). The KH-like domain occupies 353-437 (KRVKTGVLND…GIKTEFRERK (85 aa)).

Belongs to the TRAFAC class TrmE-Era-EngA-EngB-Septin-like GTPase superfamily. EngA (Der) GTPase family. In terms of assembly, associates with the 50S ribosomal subunit.

GTPase that plays an essential role in the late steps of ribosome biogenesis. The protein is GTPase Der of Clostridium botulinum (strain Loch Maree / Type A3).